A 106-amino-acid polypeptide reads, in one-letter code: UPF0235 protein OCAR_4310/OCA5_c02140 (106 aa).

This sequence belongs to the UPF0235 family.

This chain is UPF0235 protein OCAR_4310/OCA5_c02140, found in Afipia carboxidovorans (strain ATCC 49405 / DSM 1227 / KCTC 32145 / OM5) (Oligotropha carboxidovorans).